Reading from the N-terminus, the 192-residue chain is Phosphoheptose isomerase (192 aa).

The SIS domain occupies 35–192; sequence LIETLENQGK…CIERHFAHKN (158 aa). 50 to 52 provides a ligand contact to substrate; it reads NGG. Zn(2+) contacts are provided by H59 and E63. Substrate contacts are provided by residues E63, 92 to 93, 118 to 120, S123, and Q170; these read ND and STS. Zn(2+)-binding residues include Q170 and H178.

The protein belongs to the SIS family. GmhA subfamily. As to quaternary structure, homotetramer. Zn(2+) is required as a cofactor.

Its subcellular location is the cytoplasm. It catalyses the reaction 2 D-sedoheptulose 7-phosphate = D-glycero-alpha-D-manno-heptose 7-phosphate + D-glycero-beta-D-manno-heptose 7-phosphate. The protein operates within carbohydrate biosynthesis; D-glycero-D-manno-heptose 7-phosphate biosynthesis; D-glycero-alpha-D-manno-heptose 7-phosphate and D-glycero-beta-D-manno-heptose 7-phosphate from sedoheptulose 7-phosphate: step 1/1. Its function is as follows. Catalyzes the isomerization of sedoheptulose 7-phosphate in D-glycero-D-manno-heptose 7-phosphate. This chain is Phosphoheptose isomerase, found in Helicobacter pylori (strain P12).